Consider the following 51-residue polypeptide: Large ribosomal subunit protein eL39 (51 aa).

The interval 1-23 (MSALKKSFIKRKLAKKQKQNRPM) is disordered. Over residues 7–19 (SFIKRKLAKKQKQ) the composition is skewed to basic residues.

It belongs to the eukaryotic ribosomal protein eL39 family. As to quaternary structure, interacts with impact.

The sequence is that of Large ribosomal subunit protein eL39 (rpl-39) from Caenorhabditis elegans.